A 763-amino-acid polypeptide reads, in one-letter code: Phosphoglycerol transferase I (763 aa).

The next 4 helical transmembrane spans lie at 1–21 (MSELLSVALFLASVLIYAWKA), 26–46 (WWFAATLTVLGLFVILNITLY), 77–97 (ILPGIGIALALVAVFGALGWV), and 108–128 (VGYSLLALLLALGSVDASPAF).

The protein belongs to the OpgB family.

The protein resides in the cell inner membrane. The enzyme catalyses a phosphatidylglycerol + a membrane-derived-oligosaccharide D-glucose = a 1,2-diacyl-sn-glycerol + a membrane-derived-oligosaccharide 6-(glycerophospho)-D-glucose.. It functions in the pathway glycan metabolism; osmoregulated periplasmic glucan (OPG) biosynthesis. Functionally, transfers a phosphoglycerol residue from phosphatidylglycerol to the membrane-bound nascent glucan backbones. This is Phosphoglycerol transferase I from Salmonella schwarzengrund (strain CVM19633).